The following is a 257-amino-acid chain: MKKLLFTTALLTGAIAFSTFSHAGEIADRVEKTKTLLVGTEGTYAPFTFHDKSGKLTGFDVEVIRKVAEKLGLKVEFKETQWDAMYAGLNAKRFDVIANQTNPSPERLKKYSFTTPYNYSGGVIVTKSSDNSIKSFEDLKGRKSAQSATSNWGKDAKAAGAQILVVDGLAQSLELIKQGRAEATINDKLAVLDYFKQHPNSGLKIAYDRGDKTPTAFAFLQGEDALITKFNQVLEALRQDGTLKQISIEWFGYDITQ.

Positions 1 to 23 are cleaved as a signal peptide; the sequence is MKKLLFTTALLTGAIAFSTFSHA.

Belongs to the bacterial solute-binding protein 3 family.

It localises to the periplasm. Functionally, probably part of a binding-protein-dependent transport system for an amino acid. The chain is Probable amino-acid ABC transporter-binding protein HI_1080 from Haemophilus influenzae (strain ATCC 51907 / DSM 11121 / KW20 / Rd).